The primary structure comprises 293 residues: Homoserine kinase (293 aa).

ATP is bound at residue 84 to 94 (PLSRGLGSSSA).

Belongs to the GHMP kinase family. Homoserine kinase subfamily.

The protein resides in the cytoplasm. It catalyses the reaction L-homoserine + ATP = O-phospho-L-homoserine + ADP + H(+). Its pathway is amino-acid biosynthesis; L-threonine biosynthesis; L-threonine from L-aspartate: step 4/5. Functionally, catalyzes the ATP-dependent phosphorylation of L-homoserine to L-homoserine phosphate. The chain is Homoserine kinase from Nitratiruptor sp. (strain SB155-2).